The chain runs to 85 residues: U4-theraphotoxin-Hhn1h (85 aa).

The N-terminal stretch at 1-22 is a signal peptide; that stretch reads MKVTLIAILTCAAVLVLHTTAA. The propeptide occupies 23–48; sequence EELEAESQLMEVGMPDTELAAVDEER. Intrachain disulfides connect Cys52/Cys66, Cys56/Cys77, and Cys71/Cys82.

Belongs to the neurotoxin 12 (Hwtx-2) family. 02 (Hwtx-2) subfamily. As to expression, expressed by the venom gland.

Its subcellular location is the secreted. In terms of biological role, postsynaptic neurotoxin. This chain is U4-theraphotoxin-Hhn1h, found in Cyriopagopus hainanus (Chinese bird spider).